The primary structure comprises 465 residues: Innexin-11 (465 aa).

4 consecutive transmembrane segments (helical) span residues 29–49 (LMTP…QFGG), 105–125 (QWVP…SYLW), 195–215 (SGFI…NVFA), and 286–306 (IFVL…VSLV). The tract at residues 433–465 (ISTSLMPDKDDIESSSTSSEEDQKRVSNVITNI) is disordered.

This sequence belongs to the pannexin family.

It is found in the cell membrane. It localises to the cell junction. Its subcellular location is the gap junction. Structural component of the gap junctions. This chain is Innexin-11 (inx-11), found in Caenorhabditis elegans.